Consider the following 300-residue polypeptide: uncharacterized protein (300 aa).

Belongs to the histone deacetylase family.

Putative deacetylase. This is an uncharacterized protein from Picosynechococcus sp. (strain ATCC 27264 / PCC 7002 / PR-6) (Agmenellum quadruplicatum).